We begin with the raw amino-acid sequence, 436 residues long: UPF0597 protein YhaM (436 aa).

This sequence belongs to the UPF0597 family.

This chain is UPF0597 protein YhaM, found in Escherichia coli O7:K1 (strain IAI39 / ExPEC).